The chain runs to 558 residues: Formate--tetrahydrofolate ligase (558 aa).

66–73 (TPAGEGKT) lines the ATP pocket.

It belongs to the formate--tetrahydrofolate ligase family.

It catalyses the reaction (6S)-5,6,7,8-tetrahydrofolate + formate + ATP = (6R)-10-formyltetrahydrofolate + ADP + phosphate. The protein operates within one-carbon metabolism; tetrahydrofolate interconversion. This is Formate--tetrahydrofolate ligase from Neisseria meningitidis serogroup C / serotype 2a (strain ATCC 700532 / DSM 15464 / FAM18).